The sequence spans 398 residues: RNA exonuclease 3 (398 aa).

One can recognise an Exonuclease domain in the interval 239–385; that stretch reads VLALDCEMGF…QDAIAAMDII (147 aa).

The protein belongs to the REXO1/REXO3 family.

It is found in the cytoplasm. The protein resides in the nucleus. 3' to 5' exoribonuclease required for proper 3' end maturation of MRP RNA and of the U5L snRNA. The polypeptide is RNA exonuclease 3 (REX3) (Candida glabrata (strain ATCC 2001 / BCRC 20586 / JCM 3761 / NBRC 0622 / NRRL Y-65 / CBS 138) (Yeast)).